The chain runs to 331 residues: Protein Brevis radix-like 1 (331 aa).

The tract at residues 1–111 is disordered; it reads MFTCINCTKM…HQSGRPDSRF (111 aa). Polar residues-rich tracts occupy residues 25–41 and 48–66; these read STTP…TTQI and FSGS…SSNL. The BRX 1 domain maps to 137 to 192; sequence KEWMAQVEPGVHITFVSLPSGGNDLKRIRFSREVFDKWQAQRWWGENYDRIVELYN. Disordered regions lie at residues 201–246 and 258–279; these read LQTP…VPHH and TTSS…GEWV. The segment covering 221 to 235 has biased composition (basic and acidic residues); sequence DSARESRDWTQRDNN. The BRX 2 domain maps to 276 to 331; it reads GEWVEEDEPGVYITIRQLPDGTRELRRVRFSRERFGEVHAKTWWEQNRDRIQTQYL.

This sequence belongs to the BRX family. In terms of assembly, heterodimer with BRXL1. In terms of tissue distribution, expressed in roots.

The protein resides in the nucleus. Functionally, may act as a regulator of cell proliferation and elongation in the root. This chain is Protein Brevis radix-like 1 (BRXL1), found in Arabidopsis thaliana (Mouse-ear cress).